A 178-amino-acid polypeptide reads, in one-letter code: Large ribosomal subunit protein uL6 (178 aa).

Belongs to the universal ribosomal protein uL6 family. Part of the 50S ribosomal subunit.

This protein binds to the 23S rRNA, and is important in its secondary structure. It is located near the subunit interface in the base of the L7/L12 stalk, and near the tRNA binding site of the peptidyltransferase center. The sequence is that of Large ribosomal subunit protein uL6 from Oenococcus oeni (strain ATCC BAA-331 / PSU-1).